A 102-amino-acid polypeptide reads, in one-letter code: NADH-quinone oxidoreductase subunit K (102 aa).

3 consecutive transmembrane segments (helical) span residues 6–26 (LEHG…GVMV), 30–50 (LLFM…AFVL), and 62–82 (IMFI…LAIV).

It belongs to the complex I subunit 4L family. In terms of assembly, NDH-1 is composed of 14 different subunits. Subunits NuoA, H, J, K, L, M, N constitute the membrane sector of the complex.

It is found in the cell inner membrane. It carries out the reaction a quinone + NADH + 5 H(+)(in) = a quinol + NAD(+) + 4 H(+)(out). Its function is as follows. NDH-1 shuttles electrons from NADH, via FMN and iron-sulfur (Fe-S) centers, to quinones in the respiratory chain. The immediate electron acceptor for the enzyme in this species is believed to be ubiquinone. Couples the redox reaction to proton translocation (for every two electrons transferred, four hydrogen ions are translocated across the cytoplasmic membrane), and thus conserves the redox energy in a proton gradient. The sequence is that of NADH-quinone oxidoreductase subunit K from Acinetobacter baylyi (strain ATCC 33305 / BD413 / ADP1).